The primary structure comprises 545 residues: DNA mismatch repair protein MutL (545 aa).

Residues 516–545 (GRRSGARGGGEARPRPQEESFPEAPLPREP) form a disordered region.

It belongs to the DNA mismatch repair MutL/HexB family.

Its function is as follows. This protein is involved in the repair of mismatches in DNA. It is required for dam-dependent methyl-directed DNA mismatch repair. May act as a 'molecular matchmaker', a protein that promotes the formation of a stable complex between two or more DNA-binding proteins in an ATP-dependent manner without itself being part of a final effector complex. The polypeptide is DNA mismatch repair protein MutL (Thermus thermophilus (strain ATCC BAA-163 / DSM 7039 / HB27)).